Reading from the N-terminus, the 202-residue chain is Small ribosomal subunit protein uS4 (202 aa).

Residues M1–R13 are compositionally biased toward basic residues. Positions M1–R42 are disordered. One can recognise an S4 RNA-binding domain in the interval N90–N152.

This sequence belongs to the universal ribosomal protein uS4 family. Part of the 30S ribosomal subunit. Contacts protein S5. The interaction surface between S4 and S5 is involved in control of translational fidelity.

Functionally, one of the primary rRNA binding proteins, it binds directly to 16S rRNA where it nucleates assembly of the body of the 30S subunit. With S5 and S12 plays an important role in translational accuracy. The chain is Small ribosomal subunit protein uS4 from Prochlorococcus marinus subsp. pastoris (strain CCMP1986 / NIES-2087 / MED4).